Reading from the N-terminus, the 424-residue chain is Dihydroorotase (424 aa).

Zn(2+)-binding residues include histidine 58 and histidine 60. Residues 60–62 (HLR) and asparagine 92 contribute to the substrate site. Zn(2+)-binding residues include aspartate 150, histidine 177, and histidine 230. Asparagine 276 serves as a coordination point for substrate. Zn(2+) is bound at residue aspartate 303. Aspartate 303 is an active-site residue. Substrate is bound by residues histidine 307 and 321-322 (FG).

This sequence belongs to the metallo-dependent hydrolases superfamily. DHOase family. Class I DHOase subfamily. Requires Zn(2+) as cofactor.

The catalysed reaction is (S)-dihydroorotate + H2O = N-carbamoyl-L-aspartate + H(+). Its pathway is pyrimidine metabolism; UMP biosynthesis via de novo pathway; (S)-dihydroorotate from bicarbonate: step 3/3. Functionally, catalyzes the reversible cyclization of carbamoyl aspartate to dihydroorotate. The protein is Dihydroorotase of Staphylococcus aureus (strain MRSA252).